The following is a 252-amino-acid chain: Probable transcriptional regulatory protein all4276 (252 aa).

Belongs to the TACO1 family.

The protein localises to the cytoplasm. The sequence is that of Probable transcriptional regulatory protein all4276 from Nostoc sp. (strain PCC 7120 / SAG 25.82 / UTEX 2576).